The chain runs to 348 residues: MPDRLILLRPDDWHIHLRDGAALSRTVTDAARTFGRAIVMPNLVPPVRNASEAGAYRQRIQAARPADSRFEPLMTLYLTDKTSPEDIRTAKAQGFVHAAKLYPAGATTNSDAGVTRIDNIFPILEAMAEAGLPLLVHGEVTHSEVDVFDREKRFIDENLVRIIEHFPTLKVVFEHITTRDAVQFVETSSSNVGATITAHHLLYNRNHMLVGGIRPHFYCLPILKRRTHQEALLDAATSGNTKFFLGTDSAPHARHAKEAACGCAGCYTAYAAIELYAEAFEQRSALDRLEAFASHHGADFYGIPRNTDHITLIREEWTAPACMTFGEHSLVPLRAGEKLRWRLLEEKM.

Positions 14 and 16 each coordinate Zn(2+). Substrate contacts are provided by residues 16 to 18 (HLR) and asparagine 42. Positions 100, 137, and 175 each coordinate Zn(2+). Lysine 100 carries the post-translational modification N6-carboxylysine. Histidine 137 serves as a coordination point for substrate. Leucine 220 contributes to the substrate binding site. Position 248 (aspartate 248) interacts with Zn(2+). Aspartate 248 is a catalytic residue. Positions 252 and 264 each coordinate substrate.

The protein belongs to the metallo-dependent hydrolases superfamily. DHOase family. Class II DHOase subfamily. In terms of assembly, homodimer. Zn(2+) is required as a cofactor.

It carries out the reaction (S)-dihydroorotate + H2O = N-carbamoyl-L-aspartate + H(+). It participates in pyrimidine metabolism; UMP biosynthesis via de novo pathway; (S)-dihydroorotate from bicarbonate: step 3/3. Functionally, catalyzes the reversible cyclization of carbamoyl aspartate to dihydroorotate. The chain is Dihydroorotase from Azotobacter vinelandii (strain DJ / ATCC BAA-1303).